A 324-amino-acid chain; its full sequence is Acetyl-coenzyme A carboxylase carboxyl transferase subunit alpha (324 aa).

Residues 37–291 (ILEDKLENLE…NVVLQKTFEQ (255 aa)) enclose the CoA carboxyltransferase C-terminal domain.

It belongs to the AccA family. In terms of assembly, acetyl-CoA carboxylase is a heterohexamer composed of biotin carboxyl carrier protein (AccB), biotin carboxylase (AccC) and two subunits each of ACCase subunit alpha (AccA) and ACCase subunit beta (AccD).

The protein localises to the cytoplasm. The catalysed reaction is N(6)-carboxybiotinyl-L-lysyl-[protein] + acetyl-CoA = N(6)-biotinyl-L-lysyl-[protein] + malonyl-CoA. Its pathway is lipid metabolism; malonyl-CoA biosynthesis; malonyl-CoA from acetyl-CoA: step 1/1. Functionally, component of the acetyl coenzyme A carboxylase (ACC) complex. First, biotin carboxylase catalyzes the carboxylation of biotin on its carrier protein (BCCP) and then the CO(2) group is transferred by the carboxyltransferase to acetyl-CoA to form malonyl-CoA. In Bacillus cytotoxicus (strain DSM 22905 / CIP 110041 / 391-98 / NVH 391-98), this protein is Acetyl-coenzyme A carboxylase carboxyl transferase subunit alpha.